Consider the following 328-residue polypeptide: Glycerol-3-phosphate dehydrogenase [NAD(P)+] (328 aa).

3 residues coordinate NADPH: Trp-11, Arg-30, and Lys-103. Sn-glycerol 3-phosphate-binding residues include Lys-103, Gly-132, and Ser-134. Ala-136 contributes to the NADPH binding site. Lys-187, Asp-240, Ser-250, Arg-251, and Asn-252 together coordinate sn-glycerol 3-phosphate. Lys-187 functions as the Proton acceptor in the catalytic mechanism. Arg-251 is a binding site for NADPH. NADPH is bound by residues Val-275 and Glu-277.

The protein belongs to the NAD-dependent glycerol-3-phosphate dehydrogenase family.

It localises to the cytoplasm. The enzyme catalyses sn-glycerol 3-phosphate + NAD(+) = dihydroxyacetone phosphate + NADH + H(+). It catalyses the reaction sn-glycerol 3-phosphate + NADP(+) = dihydroxyacetone phosphate + NADPH + H(+). It functions in the pathway membrane lipid metabolism; glycerophospholipid metabolism. Functionally, catalyzes the reduction of the glycolytic intermediate dihydroxyacetone phosphate (DHAP) to sn-glycerol 3-phosphate (G3P), the key precursor for phospholipid synthesis. This Aromatoleum aromaticum (strain DSM 19018 / LMG 30748 / EbN1) (Azoarcus sp. (strain EbN1)) protein is Glycerol-3-phosphate dehydrogenase [NAD(P)+].